A 617-amino-acid chain; its full sequence is Proline--tRNA ligase (617 aa).

This sequence belongs to the class-II aminoacyl-tRNA synthetase family. ProS type 1 subfamily. As to quaternary structure, homodimer.

It is found in the cytoplasm. It carries out the reaction tRNA(Pro) + L-proline + ATP = L-prolyl-tRNA(Pro) + AMP + diphosphate. Functionally, catalyzes the attachment of proline to tRNA(Pro) in a two-step reaction: proline is first activated by ATP to form Pro-AMP and then transferred to the acceptor end of tRNA(Pro). As ProRS can inadvertently accommodate and process non-cognate amino acids such as alanine and cysteine, to avoid such errors it has two additional distinct editing activities against alanine. One activity is designated as 'pretransfer' editing and involves the tRNA(Pro)-independent hydrolysis of activated Ala-AMP. The other activity is designated 'posttransfer' editing and involves deacylation of mischarged Ala-tRNA(Pro). The misacylated Cys-tRNA(Pro) is not edited by ProRS. This chain is Proline--tRNA ligase, found in Streptococcus pneumoniae (strain Hungary19A-6).